Reading from the N-terminus, the 277-residue chain is Shikimate dehydrogenase (NADP(+)) (277 aa).

Shikimate contacts are provided by residues 15–17 and Thr-62; that span reads SLS. The Proton acceptor role is filled by Lys-66. Positions 87 and 102 each coordinate shikimate. Residues 127 to 131, 151 to 156, and Ile-219 each bind NADP(+); these read GAGGA and NRTVDK. Tyr-221 contributes to the shikimate binding site. An NADP(+)-binding site is contributed by Gly-242.

Belongs to the shikimate dehydrogenase family. As to quaternary structure, homodimer.

The enzyme catalyses shikimate + NADP(+) = 3-dehydroshikimate + NADPH + H(+). Its pathway is metabolic intermediate biosynthesis; chorismate biosynthesis; chorismate from D-erythrose 4-phosphate and phosphoenolpyruvate: step 4/7. In terms of biological role, involved in the biosynthesis of the chorismate, which leads to the biosynthesis of aromatic amino acids. Catalyzes the reversible NADPH linked reduction of 3-dehydroshikimate (DHSA) to yield shikimate (SA). In Bacillus cereus (strain ZK / E33L), this protein is Shikimate dehydrogenase (NADP(+)).